Consider the following 118-residue polypeptide: MIHGIGTDIVYIPRVSRILQKYGEKFLNRIYTEKEIELSRKYNSQEMRARYFAKRFAAKEAFVKARGSGQGIIMKDIEIYNDVRGKPYLTVSKDFISKIHLSLSDDGDYATAFVVICV.

Positions 8 and 60 each coordinate Mg(2+).

This sequence belongs to the P-Pant transferase superfamily. AcpS family. It depends on Mg(2+) as a cofactor.

It localises to the cytoplasm. The catalysed reaction is apo-[ACP] + CoA = holo-[ACP] + adenosine 3',5'-bisphosphate + H(+). Transfers the 4'-phosphopantetheine moiety from coenzyme A to a Ser of acyl-carrier-protein. This Wolbachia sp. subsp. Drosophila simulans (strain wRi) protein is Holo-[acyl-carrier-protein] synthase.